Reading from the N-terminus, the 180-residue chain is uncharacterized protein (180 aa).

The protein localises to the mitochondrion. This is an uncharacterized protein from Marchantia polymorpha (Common liverwort).